The sequence spans 390 residues: Formate-dependent phosphoribosylglycinamide formyltransferase (390 aa).

N(1)-(5-phospho-beta-D-ribosyl)glycinamide-binding positions include 14–15 and Glu74; that span reads EL. ATP is bound by residues Arg106, Lys147, 152 to 157, 187 to 190, and Glu195; these read SSGKGQ and EQFI. Residues 111–304 form the ATP-grasp domain; that stretch reads DLAAQELGIT…EFDLHARAIM (194 aa). Residues Glu263 and Glu275 each coordinate Mg(2+). N(1)-(5-phospho-beta-D-ribosyl)glycinamide-binding positions include Asp282, Lys351, and 358-359; that span reads RR.

It belongs to the PurK/PurT family. In terms of assembly, homodimer.

It catalyses the reaction N(1)-(5-phospho-beta-D-ribosyl)glycinamide + formate + ATP = N(2)-formyl-N(1)-(5-phospho-beta-D-ribosyl)glycinamide + ADP + phosphate + H(+). The protein operates within purine metabolism; IMP biosynthesis via de novo pathway; N(2)-formyl-N(1)-(5-phospho-D-ribosyl)glycinamide from N(1)-(5-phospho-D-ribosyl)glycinamide (formate route): step 1/1. Involved in the de novo purine biosynthesis. Catalyzes the transfer of formate to 5-phospho-ribosyl-glycinamide (GAR), producing 5-phospho-ribosyl-N-formylglycinamide (FGAR). Formate is provided by PurU via hydrolysis of 10-formyl-tetrahydrofolate. The sequence is that of Formate-dependent phosphoribosylglycinamide formyltransferase from Erythrobacter litoralis (strain HTCC2594).